Here is a 456-residue protein sequence, read N- to C-terminus: Putative gluconeogenesis factor (456 aa).

This sequence belongs to the gluconeogenesis factor family.

It is found in the cytoplasm. Required for morphogenesis under gluconeogenic growth conditions. The chain is Putative gluconeogenesis factor from Nostoc sp. (strain PCC 7120 / SAG 25.82 / UTEX 2576).